The sequence spans 434 residues: MGNVIILGSQWGDEGKGKIVDLFAERFDIVARYQGGHNAGHTVFIGEKKFVLKLIPSGILRPGKKAVIGNGLVIDPAALLSEIDTLQAAGVPVMGNLFISNRAHVLFPAHRMMEKMSEGREGRVSIGTTSRGIGPCYEDKIARRGIRIADLLDTEFFRAQYASVMEEKVLIAKALGIYSELDLRAIRDEYEAFAERIRPMVCDTSVLLNDAIRSGKTVMFEGAQGTMLDIDHGTYPFVTSSSASAGGACTGTGVAPTRISGVLGVSKAYITRVGGGPFPTEAFDGAGDRIRERGKEFGAVTGRPRRCGWFDVPLLRYTANINGFDSLVITKLDVLDEFDQIPVCVSYRIGNREVVDMPPTVAEMEKVEPVYECVPGWNTSTFGISQFGELPAKAKEYLAYLENRTGVEVGCVSTGPERNQTIVRAGSRFESLIG.

GTP is bound by residues 12-18 (GDEGKGK) and 40-42 (GHT). D13 acts as the Proton acceptor in catalysis. Mg(2+)-binding residues include D13 and G40. IMP contacts are provided by residues 13–16 (DEGK), 38–41 (NAGH), T129, R143, Q224, T239, and R303. The Proton donor role is filled by H41. 299–305 (AVTGRPR) contacts substrate. Residues R305, 331 to 333 (KLD), and 413 to 415 (STG) contribute to the GTP site.

Belongs to the adenylosuccinate synthetase family. Homodimer. The cofactor is Mg(2+).

The protein localises to the cytoplasm. It catalyses the reaction IMP + L-aspartate + GTP = N(6)-(1,2-dicarboxyethyl)-AMP + GDP + phosphate + 2 H(+). It participates in purine metabolism; AMP biosynthesis via de novo pathway; AMP from IMP: step 1/2. Plays an important role in the de novo pathway of purine nucleotide biosynthesis. Catalyzes the first committed step in the biosynthesis of AMP from IMP. The polypeptide is Adenylosuccinate synthetase (Solibacter usitatus (strain Ellin6076)).